We begin with the raw amino-acid sequence, 342 residues long: uncharacterized protein (342 aa).

It belongs to the cycloisomerase 2 family.

This is an uncharacterized protein from Staphylococcus aureus (strain NCTC 8325 / PS 47).